A 330-amino-acid chain; its full sequence is Src kinase-associated phosphoprotein 2-B (330 aa).

Positions 57 to 84 (DKAEDDDQEENDGFPLPPDAVSLASDRD) are disordered. Over residues 59 to 68 (AEDDDQEEND) the composition is skewed to acidic residues. In terms of domain architecture, PH spans 105-208 (EYLKAGYLEK…WINAIMNSRG (104 aa)). The tract at residues 236–261 (ELPEESEKPVTETETQKATPVPVNNT) is disordered. The span at 240–250 (ESEKPVTETET) shows a compositional bias: basic and acidic residues. The segment covering 251–261 (QKATPVPVNNT) has biased composition (polar residues). Positions 268 to 329 (DYANFYRGLW…PKAYIIEMYD (62 aa)) constitute an SH3 domain.

Belongs to the SKAP family. In terms of processing, phosphorylated on tyrosines.

It localises to the cytoplasm. Functionally, may be involved in B-cell and macrophage adhesion processes. May play a role in src signaling pathway. This is Src kinase-associated phosphoprotein 2-B (skap2-b) from Xenopus laevis (African clawed frog).